We begin with the raw amino-acid sequence, 70 residues long: MPGIKVHPNESFDEAYRKFKKQVDRNLIVTEVRARRFFEPMTEIRKKQKISARKKMLKRLYMLRRYESRL.

It belongs to the bacterial ribosomal protein bS21 family.

This chain is Small ribosomal subunit protein bS21, found in Campylobacter curvus (strain 525.92).